The following is a 386-amino-acid chain: Hydrazine synthase subunit beta (386 aa).

The N-terminal stretch at 1–34 (MVIRRKMNKMIRKGMIGAVMLGAAVAISGGVATA) is a signal peptide.

In terms of assembly, part of the hydrazine synthase complex that forms an elongated dimer of heterotrimers composed of one alpha, one beta and one gamma subunit.

The protein localises to the anammoxosome. Its pathway is nitrogen metabolism. Its function is as follows. Component of the hydrazine synthase complex that catalyzes the condensation of nitric oxide (NO) with ammonium to form hydrazine. The beta subunit may play a role in modulating transport of the hydroxylamine intermediate through a tunnel between the gamma and alpha subunit's active site. Is involved in anaerobic ammonium oxidation (anammox), a biological process in which nitrite is used as the electron acceptor in the conversion of ammonium to dinitrogen gas (N2) and water; this bacterial process has a major role in the Earth's nitrogen cycle and has been estimated to synthesize up to 50% of the dinitrogen gas emitted into our atmosphere from the oceans. The polypeptide is Hydrazine synthase subunit beta (Kuenenia stuttgartiensis).